The following is a 456-amino-acid chain: Molybdate transporter 1 (456 aa).

9 helical membrane-spanning segments follow: residues 67-87 (LIFT…PMPV), 110-130 (IMAA…SGLM), 133-153 (VFNI…GLAF), 177-197 (PWLG…IVLV), 225-245 (VIAN…LAFI), 309-329 (AASV…FGAM), 354-374 (LLGV…VGIL), 377-397 (FPVG…AMAA), and 417-437 (LGSN…VLWM).

The protein belongs to the SLC26A/SulP transporter (TC 2.A.53) family. In terms of tissue distribution, strongly expressed in roots. Detected in the vascular tissues of hypocotyls, in petioles and vascular tissues of cotyledons and leaves, in mesophyll cells, stamen, sepals and siliques.

It localises to the cell membrane. The protein resides in the endomembrane system. It is found in the mitochondrion membrane. With respect to regulation, not inhibited by sulfate. In terms of biological role, high affinity molybdate transporter. Unable to transport sulfate. The polypeptide is Molybdate transporter 1 (MOT1) (Arabidopsis thaliana (Mouse-ear cress)).